Consider the following 566-residue polypeptide: Proline--tRNA ligase 1 (566 aa).

It belongs to the class-II aminoacyl-tRNA synthetase family. ProS type 1 subfamily. Homodimer.

It is found in the cytoplasm. The enzyme catalyses tRNA(Pro) + L-proline + ATP = L-prolyl-tRNA(Pro) + AMP + diphosphate. Its function is as follows. Catalyzes the attachment of proline to tRNA(Pro) in a two-step reaction: proline is first activated by ATP to form Pro-AMP and then transferred to the acceptor end of tRNA(Pro). As ProRS can inadvertently accommodate and process non-cognate amino acids such as alanine and cysteine, to avoid such errors it has two additional distinct editing activities against alanine. One activity is designated as 'pretransfer' editing and involves the tRNA(Pro)-independent hydrolysis of activated Ala-AMP. The other activity is designated 'posttransfer' editing and involves deacylation of mischarged Ala-tRNA(Pro). The misacylated Cys-tRNA(Pro) is not edited by ProRS. In Bacillus cereus (strain ATCC 14579 / DSM 31 / CCUG 7414 / JCM 2152 / NBRC 15305 / NCIMB 9373 / NCTC 2599 / NRRL B-3711), this protein is Proline--tRNA ligase 1.